Consider the following 248-residue polypeptide: 1-(5-phosphoribosyl)-5-[(5-phosphoribosylamino)methylideneamino] imidazole-4-carboxamide isomerase (248 aa).

Catalysis depends on Asp-7, which acts as the Proton acceptor. Asp-129 acts as the Proton donor in catalysis.

The protein belongs to the HisA/HisF family.

It localises to the cytoplasm. The enzyme catalyses 1-(5-phospho-beta-D-ribosyl)-5-[(5-phospho-beta-D-ribosylamino)methylideneamino]imidazole-4-carboxamide = 5-[(5-phospho-1-deoxy-D-ribulos-1-ylimino)methylamino]-1-(5-phospho-beta-D-ribosyl)imidazole-4-carboxamide. It participates in amino-acid biosynthesis; L-histidine biosynthesis; L-histidine from 5-phospho-alpha-D-ribose 1-diphosphate: step 4/9. The chain is 1-(5-phosphoribosyl)-5-[(5-phosphoribosylamino)methylideneamino] imidazole-4-carboxamide isomerase from Aeromonas salmonicida (strain A449).